Consider the following 264-residue polypeptide: Thymidylate synthase (264 aa).

DUMP is bound at residue R21. Residue H51 participates in (6R)-5,10-methylene-5,6,7,8-tetrahydrofolate binding. Position 126–127 (126–127) interacts with dUMP; it reads RR. C146 (nucleophile) is an active-site residue. Residues 166–169, N177, and 207–209 contribute to the dUMP site; these read RSCD and HLY. D169 contributes to the (6R)-5,10-methylene-5,6,7,8-tetrahydrofolate binding site. A263 provides a ligand contact to (6R)-5,10-methylene-5,6,7,8-tetrahydrofolate.

Belongs to the thymidylate synthase family. Bacterial-type ThyA subfamily. In terms of assembly, homodimer.

The protein resides in the cytoplasm. The catalysed reaction is dUMP + (6R)-5,10-methylene-5,6,7,8-tetrahydrofolate = 7,8-dihydrofolate + dTMP. It participates in pyrimidine metabolism; dTTP biosynthesis. Functionally, catalyzes the reductive methylation of 2'-deoxyuridine-5'-monophosphate (dUMP) to 2'-deoxythymidine-5'-monophosphate (dTMP) while utilizing 5,10-methylenetetrahydrofolate (mTHF) as the methyl donor and reductant in the reaction, yielding dihydrofolate (DHF) as a by-product. This enzymatic reaction provides an intracellular de novo source of dTMP, an essential precursor for DNA biosynthesis. This is Thymidylate synthase from Shewanella putrefaciens (strain CN-32 / ATCC BAA-453).